Here is a 93-residue protein sequence, read N- to C-terminus: Small ribosomal subunit protein uS19 (93 aa).

The protein belongs to the universal ribosomal protein uS19 family.

Protein S19 forms a complex with S13 that binds strongly to the 16S ribosomal RNA. This Mycolicibacterium paratuberculosis (strain ATCC BAA-968 / K-10) (Mycobacterium paratuberculosis) protein is Small ribosomal subunit protein uS19.